Consider the following 64-residue polypeptide: Large ribosomal subunit protein bL35 (64 aa).

Belongs to the bacterial ribosomal protein bL35 family.

This is Large ribosomal subunit protein bL35 from Helicobacter hepaticus (strain ATCC 51449 / 3B1).